The chain runs to 60 residues: Antimicrobial peptide Eval151 (60 aa).

The signal sequence occupies residues Met1–Cys23. Arg36 is subject to Arginine amide. Positions Arg36–His54 are enriched in basic and acidic residues. The interval Arg36–Lys60 is disordered. A propeptide spanning residues Gly37–Lys60 is cleaved from the precursor.

The protein belongs to the non-disulfide-bridged peptide (NDBP) superfamily. In terms of tissue distribution, expressed by the venom gland.

It localises to the secreted. Probable antimicrobial peptide. Has no inhibitory activity against herpes simplex virus type 1 (HSV-1). The sequence is that of Antimicrobial peptide Eval151 from Euscorpiops validus (Scorpion).